We begin with the raw amino-acid sequence, 276 residues long: Probable endonuclease 4 (276 aa).

Zn(2+)-binding residues include His65, His105, Glu141, Asp175, His178, His210, Asp223, His225, and Glu255.

It belongs to the AP endonuclease 2 family. Zn(2+) serves as cofactor.

It catalyses the reaction Endonucleolytic cleavage to 5'-phosphooligonucleotide end-products.. Its function is as follows. Endonuclease IV plays a role in DNA repair. It cleaves phosphodiester bonds at apurinic or apyrimidinic (AP) sites, generating a 3'-hydroxyl group and a 5'-terminal sugar phosphate. In Symbiobacterium thermophilum (strain DSM 24528 / JCM 14929 / IAM 14863 / T), this protein is Probable endonuclease 4.